A 677-amino-acid polypeptide reads, in one-letter code: Methionine--tRNA ligase (677 aa).

A 'HIGH' region motif is present at residues 14 to 24 (PYANGAIHLGH). Zn(2+) contacts are provided by C145, C148, C158, and C161. A 'KMSKS' region motif is present at residues 330–334 (KMSKS). Residue K333 participates in ATP binding. The tRNA-binding domain occupies 576–677 (DFAKVDLRVA…EGALPGMRVM (102 aa)).

The protein belongs to the class-I aminoacyl-tRNA synthetase family. MetG type 1 subfamily. As to quaternary structure, homodimer. Zn(2+) serves as cofactor.

It is found in the cytoplasm. The catalysed reaction is tRNA(Met) + L-methionine + ATP = L-methionyl-tRNA(Met) + AMP + diphosphate. Its function is as follows. Is required not only for elongation of protein synthesis but also for the initiation of all mRNA translation through initiator tRNA(fMet) aminoacylation. The sequence is that of Methionine--tRNA ligase from Saccharophagus degradans (strain 2-40 / ATCC 43961 / DSM 17024).